We begin with the raw amino-acid sequence, 149 residues long: Deoxyuridine 5'-triphosphate nucleotidohydrolase (149 aa).

Residues 68 to 70, asparagine 81, 85 to 87, and lysine 95 each bind substrate; these read RSG and TVD.

This sequence belongs to the dUTPase family. Mg(2+) serves as cofactor.

It catalyses the reaction dUTP + H2O = dUMP + diphosphate + H(+). It functions in the pathway pyrimidine metabolism; dUMP biosynthesis; dUMP from dCTP (dUTP route): step 2/2. Its function is as follows. This enzyme is involved in nucleotide metabolism: it produces dUMP, the immediate precursor of thymidine nucleotides and it decreases the intracellular concentration of dUTP so that uracil cannot be incorporated into DNA. In Wolinella succinogenes (strain ATCC 29543 / DSM 1740 / CCUG 13145 / JCM 31913 / LMG 7466 / NCTC 11488 / FDC 602W) (Vibrio succinogenes), this protein is Deoxyuridine 5'-triphosphate nucleotidohydrolase.